A 1507-amino-acid polypeptide reads, in one-letter code: Protein similar (1507 aa).

The interval 1 to 85 is disordered; the sequence is MVSLIDTIEA…KSRDAARCRR (85 aa). Residues 26–49 are compositionally biased toward low complexity; that stretch reads SASSSSCSSSFSSSPPSSSVGSPS. Positions 72 to 85 are enriched in basic and acidic residues; that stretch reads KRKEKSRDAARCRR. Residues 72 to 125 enclose the bHLH domain; sequence KRKEKSRDAARCRRSKETEIFMELSAALPLKTDDVNQLDKASVMRITIAFLKIR. PAS domains follow at residues 167 to 240 and 307 to 377; these read NGAE…LAQK and PHPS…LSKG. Residues 381–422 form the PAC domain; it reads TSRYRFLGKYGGYCWILSQATIVYDKLKPQSVVCVNYVISNL. Disordered regions lie at residues 433-459, 541-588, 706-832, and 900-951; these read QQTA…KAAD, HSPG…PPPT, TCST…CSPN, and YAGN…QAAV. The span at 439 to 459 shows a compositional bias: basic and acidic residues; that stretch reads EQKEQHHQAAETEKEPEKAAD. A compositionally biased stretch (polar residues) spans 548 to 559; the sequence is ITAQLLSGSSSG. The span at 578–588 shows a compositional bias: pro residues; sequence SPAPPLTPPPT. An ODD region spans residues 692–863; that stretch reads TCLLPEDINS…IDDDMPLLTE (172 aa). The segment covering 706–717 has biased composition (polar residues); that stretch reads TCSTTASGQHYQ. Low complexity-rich tracts occupy residues 718 to 745 and 754 to 777; these read SPSS…LSPL and SNPS…QQQH. Over residues 803-818 the composition is skewed to polar residues; it reads DTSCSQHLHSPSITSK. Composition is skewed to low complexity over residues 823 to 832, 907 to 918, and 926 to 951; these read SSLPSLCSPN, QQQQQQPQLQQQ, and SSPA…QAAV. Residues 880-908 are a coiled coil; that stretch reads KEIDAIQQQLQQLQQQHHQQYAGNTGYQQ. Coiled-coil stretches lie at residues 982–1054 and 1110–1162; these read AEEC…YDVQ and QLLQ…QLQQ. Disordered regions lie at residues 1204–1228, 1251–1287, and 1356–1460; these read PQQQ…VESK, KDPA…QSNS, and FGGS…KTSI. Residues 1413-1423 show a composition bias toward polar residues; the sequence is SSTSNSTNQAE.

As to quaternary structure, efficient DNA binding requires dimerization with another bHLH protein. Interacts with Vhl. As to expression, ubiquitously expressed in the embryo.

Its subcellular location is the cytoplasm. The protein resides in the nucleus. Its function is as follows. Functions as a transcriptional regulator of the adaptive response to hypoxia. Binds to core DNA sequence 5'-[AG]CGTG-3' within the hypoxia response element (HRE) of target gene promoters. This Drosophila melanogaster (Fruit fly) protein is Protein similar (sima).